The chain runs to 266 residues: MTKKKLPLRFTGQHFTIDKVLIKDAIRQANISNQDTVLDIGAGKGFLTVHLLKIANNVVAIENDTALVEHLRKLFSDARNVQVVGCDFRNFAVPKFPFKVVSNIPYGITSDIFKILMFENLENFLGGSIVLQFEPTQKLFSRKLYNPYTVFYHTFFDLKLVYEVGPESFLPPPTVKSALLNIKRKHLFFDFKIKAKYLAFISCLLEKPDLSVKTALKSIFRKSQVRTISEKFGLNLNAQIVCLSPSQWLNCFLEMLEVVPEKFHPS.

Positions 14, 16, 41, 62, 87, and 103 each coordinate S-adenosyl-L-methionine.

Belongs to the class I-like SAM-binding methyltransferase superfamily. rRNA adenine N(6)-methyltransferase family.

Functionally, involved in erythromycin resistance. The chain is rRNA adenine N-6-methyltransferase (ermFU) from Bacteroides fragilis.